The sequence spans 314 residues: DNA-directed RNA polymerase subunit alpha (314 aa).

The alpha N-terminal domain (alpha-NTD) stretch occupies residues 1 to 228 (MIEIEKPKIE…EHLNIFVGLT (228 aa)). Residues 246-314 (EKVLEMTIEE…ELGLGLRKDD (69 aa)) form an alpha C-terminal domain (alpha-CTD) region.

It belongs to the RNA polymerase alpha chain family. As to quaternary structure, homodimer. The RNAP catalytic core consists of 2 alpha, 1 beta, 1 beta' and 1 omega subunit. When a sigma factor is associated with the core the holoenzyme is formed, which can initiate transcription.

The enzyme catalyses RNA(n) + a ribonucleoside 5'-triphosphate = RNA(n+1) + diphosphate. In terms of biological role, DNA-dependent RNA polymerase catalyzes the transcription of DNA into RNA using the four ribonucleoside triphosphates as substrates. This is DNA-directed RNA polymerase subunit alpha from Bacillus pumilus (strain SAFR-032).